Reading from the N-terminus, the 270-residue chain is ATP synthase subunit b 1 (270 aa).

The helical transmembrane segment at 2 to 22 (LIDWFTVIAQLINFLVLVWLL) threads the bilayer.

This sequence belongs to the ATPase B chain family. As to quaternary structure, F-type ATPases have 2 components, F(1) - the catalytic core - and F(0) - the membrane proton channel. F(1) has five subunits: alpha(3), beta(3), gamma(1), delta(1), epsilon(1). F(0) has three main subunits: a(1), b(2) and c(10-14). The alpha and beta chains form an alternating ring which encloses part of the gamma chain. F(1) is attached to F(0) by a central stalk formed by the gamma and epsilon chains, while a peripheral stalk is formed by the delta and b chains.

It is found in the cell inner membrane. In terms of biological role, f(1)F(0) ATP synthase produces ATP from ADP in the presence of a proton or sodium gradient. F-type ATPases consist of two structural domains, F(1) containing the extramembraneous catalytic core and F(0) containing the membrane proton channel, linked together by a central stalk and a peripheral stalk. During catalysis, ATP synthesis in the catalytic domain of F(1) is coupled via a rotary mechanism of the central stalk subunits to proton translocation. Functionally, component of the F(0) channel, it forms part of the peripheral stalk, linking F(1) to F(0). The polypeptide is ATP synthase subunit b 1 (Marinomonas sp. (strain MWYL1)).